The sequence spans 130 residues: uncharacterized protein (130 aa).

The chain crosses the membrane as a helical span at residues 21 to 43 (VAVCTVAAEVLAIFTLVCTRVFI).

The protein localises to the membrane. This is an uncharacterized protein from Saccharomyces cerevisiae (strain ATCC 204508 / S288c) (Baker's yeast).